Reading from the N-terminus, the 167-residue chain is NAD(P)H-quinone oxidoreductase subunit I, chloroplastic (167 aa).

4Fe-4S ferredoxin-type domains are found at residues 55 to 84 (GRIHFEFDKCIACEVCVRVCPINLPVVDWI) and 95 to 124 (KNYSIDFGVCIFCGNCVEYCPTNCLSMTEE). 8 residues coordinate [4Fe-4S] cluster: Cys-64, Cys-67, Cys-70, Cys-74, Cys-104, Cys-107, Cys-110, and Cys-114.

It belongs to the complex I 23 kDa subunit family. In terms of assembly, NDH is composed of at least 16 different subunits, 5 of which are encoded in the nucleus. [4Fe-4S] cluster serves as cofactor.

It is found in the plastid. Its subcellular location is the chloroplast thylakoid membrane. It carries out the reaction a plastoquinone + NADH + (n+1) H(+)(in) = a plastoquinol + NAD(+) + n H(+)(out). The catalysed reaction is a plastoquinone + NADPH + (n+1) H(+)(in) = a plastoquinol + NADP(+) + n H(+)(out). In terms of biological role, NDH shuttles electrons from NAD(P)H:plastoquinone, via FMN and iron-sulfur (Fe-S) centers, to quinones in the photosynthetic chain and possibly in a chloroplast respiratory chain. The immediate electron acceptor for the enzyme in this species is believed to be plastoquinone. Couples the redox reaction to proton translocation, and thus conserves the redox energy in a proton gradient. The polypeptide is NAD(P)H-quinone oxidoreductase subunit I, chloroplastic (Adiantum capillus-veneris (Maidenhair fern)).